The following is a 130-amino-acid chain: Small ribosomal subunit protein uS11c (130 aa).

Belongs to the universal ribosomal protein uS11 family. Part of the 30S ribosomal subunit.

The protein localises to the plastid. The protein resides in the chloroplast. The protein is Small ribosomal subunit protein uS11c of Marchantia polymorpha (Common liverwort).